The following is a 412-amino-acid chain: Potassium channel, subfamily K, member 13 (412 aa).

Residues 1–21 lie on the Cytoplasmic side of the membrane; the sequence is MACRSGCCCNSIGSFNEDNAR. The helical transmembrane segment at 22-42 threads the bilayer; it reads FLMLALLIIIYLLCGAAVFSA. The segment at residues 97–117 is an intramembrane region (pore-forming); the sequence is WDFAGAFYFVGTVVSTIGFGM. K(+) contacts are provided by threonine 112, isoleucine 113, and glycine 114. The segment at 112–117 is selectivity filter 1; sequence TIGFGM. A helical membrane pass occupies residues 127 to 147; sequence IFLIFYGLIGCAATILFFNLF. The Cytoplasmic portion of the chain corresponds to 148-198; sequence LERVITVIAFVLKFCHERRESRKAGPTQNCRRPSTDNRDRRTDSLAGWKPS. The chain crosses the membrane as a helical span at residues 199 to 219; it reads VYCVMLILGVAAILVSCCASA. The segment at residues 229–249 is an intramembrane region (pore-forming); it reads YLDALYFCFVAFSTIGFGDMV. K(+) contacts are provided by threonine 242, isoleucine 243, glycine 244, and phenylalanine 245. Residues 242 to 247 form a selectivity filter 2 region; the sequence is TIGFGD. Residues 268–288 form a helical membrane-spanning segment; the sequence is LFILTGVCCIYSLFNVISIVI. Residues 289–412 lie on the Cytoplasmic side of the membrane; it reads KQVLNWLLRR…NRLAETSVDR (124 aa). A compositionally biased stretch (polar residues) spans 374–386; the sequence is MANGHPRQSGSSS. The segment at 374 to 395 is disordered; the sequence is MANGHPRQSGSSSRHNEFSGGV.

The protein belongs to the two pore domain potassium channel (TC 1.A.1.8) family. Homodimer. Heterodimer. In terms of tissue distribution, brain and heart.

It localises to the cell membrane. It catalyses the reaction K(+)(in) = K(+)(out). With respect to regulation, the channel conductance is activated by arachidonic acid and inhibited by Ba(2+) ions, volatile anesthetics such as halothane and antiarrhythmic drug mexiletine. Insensitive to extracellular pH change. Functionally, k(+) channel that conducts outward rectifying tonic currents potentiated by purinergic signals. Homo- and heterodimerizes to form functional channels with distinct regulatory and gating properties. Contributes most of K(+) currents at the plasma membrane of resting microglia. Maintains a depolarized membrane potential required for proper ramified microglia morphology and phagocytosis, selectively mediating microglial pruning of presynaptic compartments at hippocampal excitatory synapses. Upon local release of ATP caused by neuronal injury or infection, it is potentiated by purinergic signaling and contributes to ATP-triggered K(+) efflux underlying microglial NLRP3 inflammasome assembly and IL1B release. The polypeptide is Potassium channel, subfamily K, member 13 (Danio rerio (Zebrafish)).